The sequence spans 154 residues: Ribonuclease H (154 aa).

The RNase H type-1 domain occupies 1-141 (MKRIEAYTDG…ADELAREGME (141 aa)). Mg(2+)-binding residues include D9, E47, D69, and D133.

This sequence belongs to the RNase H family. In terms of assembly, monomer. The cofactor is Mg(2+).

The protein localises to the cytoplasm. The catalysed reaction is Endonucleolytic cleavage to 5'-phosphomonoester.. In terms of biological role, endonuclease that specifically degrades the RNA of RNA-DNA hybrids. The sequence is that of Ribonuclease H from Brucella anthropi (strain ATCC 49188 / DSM 6882 / CCUG 24695 / JCM 21032 / LMG 3331 / NBRC 15819 / NCTC 12168 / Alc 37) (Ochrobactrum anthropi).